The following is a 421-amino-acid chain: UDP-N-acetylglucosamine 1-carboxyvinyltransferase (421 aa).

26-27 (KN) serves as a coordination point for phosphoenolpyruvate. UDP-N-acetyl-alpha-D-glucosamine is bound at residue Arg96. Residue Asp120 is the Proton donor of the active site. Positions 308 and 330 each coordinate UDP-N-acetyl-alpha-D-glucosamine.

This sequence belongs to the EPSP synthase family. MurA subfamily.

Its subcellular location is the cytoplasm. The enzyme catalyses phosphoenolpyruvate + UDP-N-acetyl-alpha-D-glucosamine = UDP-N-acetyl-3-O-(1-carboxyvinyl)-alpha-D-glucosamine + phosphate. Its pathway is cell wall biogenesis; peptidoglycan biosynthesis. Functionally, cell wall formation. Adds enolpyruvyl to UDP-N-acetylglucosamine. The chain is UDP-N-acetylglucosamine 1-carboxyvinyltransferase from Corynebacterium efficiens (strain DSM 44549 / YS-314 / AJ 12310 / JCM 11189 / NBRC 100395).